The chain runs to 351 residues: 3-dehydroquinate synthase (351 aa).

NAD(+) is bound by residues 60–65, 94–98, 118–119, lysine 131, lysine 140, and 158–161; these read DGEEYK, GVISD, TT, and FLKT. Residues glutamate 173, histidine 239, and histidine 256 each contribute to the Zn(2+) site.

This sequence belongs to the sugar phosphate cyclases superfamily. Dehydroquinate synthase family. It depends on Co(2+) as a cofactor. Zn(2+) serves as cofactor. The cofactor is NAD(+).

It is found in the cytoplasm. It carries out the reaction 7-phospho-2-dehydro-3-deoxy-D-arabino-heptonate = 3-dehydroquinate + phosphate. Its pathway is metabolic intermediate biosynthesis; chorismate biosynthesis; chorismate from D-erythrose 4-phosphate and phosphoenolpyruvate: step 2/7. Its function is as follows. Catalyzes the conversion of 3-deoxy-D-arabino-heptulosonate 7-phosphate (DAHP) to dehydroquinate (DHQ). This Campylobacter jejuni subsp. jejuni serotype O:23/36 (strain 81-176) protein is 3-dehydroquinate synthase.